Here is a 434-residue protein sequence, read N- to C-terminus: Hydrogenobyrinate a,c-diamide synthase (434 aa).

One can recognise a GATase cobBQ-type domain in the interval 243 to 434 (RIAVARDIAF…MHLIDVAGAA (192 aa)). Residue C326 is the Nucleophile of the active site.

Belongs to the CobB/CbiA family. As to quaternary structure, homodimer. The cofactor is Mg(2+).

It catalyses the reaction hydrogenobyrinate + 2 L-glutamine + 2 ATP + 2 H2O = hydrogenobyrinate a,c-diamide + 2 L-glutamate + 2 ADP + 2 phosphate + 2 H(+). The protein operates within cofactor biosynthesis; adenosylcobalamin biosynthesis; cob(II)yrinate a,c-diamide from precorrin-2 (aerobic route): step 9/10. Catalyzes the ATP-dependent amidation of the two carboxylate groups at positions a and c of hydrogenobyrinate, using either L-glutamine or ammonia as the nitrogen source. To a much lesser extent, can also use cobyrinate as substrate in vitro, but the physiological substrate is indeed hydrogenobyrinate, as part of the aerobic pathway for cobalamin biosynthesis. This chain is Hydrogenobyrinate a,c-diamide synthase, found in Sinorhizobium sp.